The sequence spans 264 residues: Phosphonates import ATP-binding protein PhnC (264 aa).

The ABC transporter domain maps to 8–255 (LQAENLRMTF…KLIEIYGPEF (248 aa)). Residue 40-47 (GPSGSGKS) participates in ATP binding.

It belongs to the ABC transporter superfamily. Phosphonates importer (TC 3.A.1.9.1) family. In terms of assembly, the complex is composed of two ATP-binding proteins (PhnC), two transmembrane proteins (PhnE) and a solute-binding protein (PhnD).

The protein localises to the cell inner membrane. The catalysed reaction is phosphonate(out) + ATP + H2O = phosphonate(in) + ADP + phosphate + H(+). In terms of biological role, part of the ABC transporter complex PhnCDE involved in phosphonates import. Responsible for energy coupling to the transport system. In Maricaulis maris (strain MCS10) (Caulobacter maris), this protein is Phosphonates import ATP-binding protein PhnC.